We begin with the raw amino-acid sequence, 435 residues long: MALPVVAIVGQPNVGKSTLFNRIINQRLAIVEDKPGVTRDRNYAQAEWMGHKFDLIDTGGITWEGGKIEEEIRAQAEIAIEEADVIVMLTNVVNHVTDLDERIAHLLYRTKKPVILAVNKADNPEQRNDIYDFYSLGLGDPIPVSSSHGTGIGDLLDEIVSDFPAEKDSQANDVISFSVIGRPNVGKSSIVNKLLGEDRVIVANEEGTTRDAVDTPFTKDGVKFKVVDTAGIRRRGKVYEKTEKYSVLRAVAAIERSDVVLLVLDASTGIREQDKHVAGYAHEAGRGIIIVVNKWDLPKKNSTSAKEFEREIRAEFQYLDYAPILFVSAKTGQRLDQIPSMVKEVYDNQNQRIQSSVLNDLLLEASKLVPTPMIKGKRLRVYYMTQVSTNPPTFVVFVNDPELMHFSYERFLINQLRQNFDFAGTPIKILPRKRK.

EngA-type G domains follow at residues 4-167 (PVVA…PAEK) and 175-350 (ISFS…DNQN). GTP contacts are provided by residues 10 to 17 (GQPNVGKS), 57 to 61 (DTGGI), 119 to 122 (NKAD), 181 to 188 (GRPNVGKS), 228 to 232 (DTAGI), and 293 to 296 (NKWD). The KH-like domain maps to 351-435 (QRIQSSVLND…PIKILPRKRK (85 aa)).

It belongs to the TRAFAC class TrmE-Era-EngA-EngB-Septin-like GTPase superfamily. EngA (Der) GTPase family. In terms of assembly, associates with the 50S ribosomal subunit.

Its function is as follows. GTPase that plays an essential role in the late steps of ribosome biogenesis. In Lactobacillus helveticus (strain DPC 4571), this protein is GTPase Der.